A 127-amino-acid polypeptide reads, in one-letter code: Biogenesis of lysosome-related organelles complex 1 subunit 2 (127 aa).

The protein belongs to the BLOC1S2 family. As to quaternary structure, component of the biogenesis of lysosome-related organelles complex-1 (BLOC-1). Interacts with BLOS1 and SNX1.

It localises to the cytoplasm. The protein localises to the endosome. Its function is as follows. Component of the biogenesis of lysosome-related organelles complex-1 (BLOC-1), a complex that mediates the vacuolar degradative transport via the intracellular vesicle trafficking from the endosome to the vacuole. In Arabidopsis thaliana (Mouse-ear cress), this protein is Biogenesis of lysosome-related organelles complex 1 subunit 2 (BLOS2).